The following is a 261-amino-acid chain: [LysW]-aminoadipate/[LysW]-glutamate kinase (261 aa).

Residues 35-36, R62, and N166 each bind substrate; that span reads GG.

The protein belongs to the acetylglutamate kinase family. LysZ subfamily.

It is found in the cytoplasm. The enzyme catalyses [amino-group carrier protein]-C-terminal-N-(1,4-dicarboxybutan-1-yl)-L-glutamine + ATP = [amino-group carrier protein]-C-terminal-N-(1-carboxy-5-phosphooxy-5-oxopentan-1-yl)-L-glutamine + ADP. The catalysed reaction is [amino-group carrier protein]-C-terminal-gamma-(L-glutamyl)-L-glutamate + ATP = [amino-group carrier protein]-C-terminal-gamma-(5-phospho-L-glutamyl)-L-glutamate + ADP. Its pathway is amino-acid biosynthesis; L-lysine biosynthesis via AAA pathway; L-lysine from L-alpha-aminoadipate (Thermus route): step 2/5. It participates in amino-acid biosynthesis; L-arginine biosynthesis. Its function is as follows. Involved in both the arginine and lysine biosynthetic pathways. Phosphorylates the LysW-bound precursors glutamate (for arginine biosynthesis), respectively alpha-aminoadipate (for lysine biosynthesis). The polypeptide is [LysW]-aminoadipate/[LysW]-glutamate kinase (Sulfolobus acidocaldarius (strain ATCC 33909 / DSM 639 / JCM 8929 / NBRC 15157 / NCIMB 11770)).